An 89-amino-acid polypeptide reads, in one-letter code: UPF0298 protein GK1096 (89 aa).

This sequence belongs to the UPF0298 family.

It localises to the cytoplasm. This Geobacillus kaustophilus (strain HTA426) protein is UPF0298 protein GK1096.